The sequence spans 470 residues: ATP synthase subunit beta (470 aa).

An ATP-binding site is contributed by 157-164 (GGAGVGKT).

It belongs to the ATPase alpha/beta chains family. In terms of assembly, F-type ATPases have 2 components, CF(1) - the catalytic core - and CF(0) - the membrane proton channel. CF(1) has five subunits: alpha(3), beta(3), gamma(1), delta(1), epsilon(1). CF(0) has three main subunits: a(1), b(2) and c(9-12). The alpha and beta chains form an alternating ring which encloses part of the gamma chain. CF(1) is attached to CF(0) by a central stalk formed by the gamma and epsilon chains, while a peripheral stalk is formed by the delta and b chains.

It localises to the cell inner membrane. The enzyme catalyses ATP + H2O + 4 H(+)(in) = ADP + phosphate + 5 H(+)(out). In terms of biological role, produces ATP from ADP in the presence of a proton gradient across the membrane. The catalytic sites are hosted primarily by the beta subunits. In Geobacter metallireducens (strain ATCC 53774 / DSM 7210 / GS-15), this protein is ATP synthase subunit beta.